The primary structure comprises 270 residues: uncharacterized protein (270 aa).

Helical transmembrane passes span 12–32 (AAIV…RNVG), 35–55 (TLSV…PFCL), 64–84 (TLLG…AAIQ), 88–108 (VAMA…LSVL), 117–137 (TLLA…PYAE), 138–158 (LTFG…VFVL), 171–191 (ITFY…LMFG), 194–214 (GSWL…FVLF), 226–246 (APIL…FYFG), and 248–268 (TLTL…LIAW). EamA domains follow at residues 19 to 133 (VLMG…LMLT) and 150 to 269 (LSYA…IAWR).

It belongs to the EamA transporter family.

The protein resides in the cell membrane. This is an uncharacterized protein from Archaeoglobus fulgidus (strain ATCC 49558 / DSM 4304 / JCM 9628 / NBRC 100126 / VC-16).